The primary structure comprises 218 residues: MGQKVHPEGFRLGVRRKGEKVDFKSQWYSDRDFAELLGEDLKIREHIERKLARAGIAEIEIKKAAEQGEVVVDIHTARPGIVIGKGGSEVDALRRDLERLTSKKVQVNVREVSRPELNAKLVAESIAEQLEGRAAFRRTMKRALTSAMRSGAVGARIQCSGRLGGIEMSRSETVSEGKVPLHTLDADIDYGFKEANTQMGQIGVKVWINHGIHTDEER.

The KH type-2 domain occupies 43 to 113 (IREHIERKLA…KVQVNVREVS (71 aa)).

The protein belongs to the universal ribosomal protein uS3 family. As to quaternary structure, part of the 30S ribosomal subunit. Forms a tight complex with proteins S10 and S14.

In terms of biological role, binds the lower part of the 30S subunit head. Binds mRNA in the 70S ribosome, positioning it for translation. The polypeptide is Small ribosomal subunit protein uS3 (Rubrobacter xylanophilus (strain DSM 9941 / JCM 11954 / NBRC 16129 / PRD-1)).